Reading from the N-terminus, the 352-residue chain is Chorismate synthase (352 aa).

An NADP(+)-binding site is contributed by R48. Residues 125 to 127 (RSS), 237 to 238 (NA), G278, 293 to 297 (KPTSS), and R319 each bind FMN.

It belongs to the chorismate synthase family. Homotetramer. FMNH2 is required as a cofactor.

The catalysed reaction is 5-O-(1-carboxyvinyl)-3-phosphoshikimate = chorismate + phosphate. Its pathway is metabolic intermediate biosynthesis; chorismate biosynthesis; chorismate from D-erythrose 4-phosphate and phosphoenolpyruvate: step 7/7. Catalyzes the anti-1,4-elimination of the C-3 phosphate and the C-6 proR hydrogen from 5-enolpyruvylshikimate-3-phosphate (EPSP) to yield chorismate, which is the branch point compound that serves as the starting substrate for the three terminal pathways of aromatic amino acid biosynthesis. This reaction introduces a second double bond into the aromatic ring system. The sequence is that of Chorismate synthase from Francisella tularensis subsp. holarctica (strain FTNF002-00 / FTA).